A 276-amino-acid polypeptide reads, in one-letter code: Protein G1 (276 aa).

Disordered regions lie at residues 1-30 and 178-213; these read MSSS…SQKR and SYHK…ATAP. Over residues 21-30 the composition is skewed to basic and acidic residues; it reads RPSRYESQKR. An ALOG domain is found at 24–183; it reads RYESQKRRDW…ARGISYHKKK (160 aa). A compositionally biased stretch (basic residues) spans 178–187; the sequence is SYHKKKKRRG. The Nuclear localization signal motif lies at 181–185; it reads KKKKR. Over residues 189 to 202 the composition is skewed to gly residues; the sequence is NMNGARGGGGGGAR. The segment covering 203–213 has biased composition (low complexity); sequence AGVNDGDATAP.

The protein belongs to the plant homeotic and developmental regulators ALOG protein family. In terms of tissue distribution, expressed at the empty glumes of immature spikelets, which are lemmas of the sterile florets located at the lateral side of the spikelet, throughout their development.

The protein resides in the nucleus. Probable transcription regulator that acts as a developmental regulator by promoting cell growth in response to light. Transcription regulator that restrains empty glumes growth, lemmas of the sterile florets located at the lateral side of the rice spikelet, to maintain their small size, probably by repressing lemma identity via transcription regulation. The protein is Protein G1 (G1) of Oryza sativa subsp. japonica (Rice).